A 237-amino-acid chain; its full sequence is Ribose-5-phosphate isomerase A (237 aa).

Substrate is bound by residues 30–33 (SGST), 87–90 (DGAD), and 100–103 (KGGG). Catalysis depends on Glu-109, which acts as the Proton acceptor. Residue Lys-127 participates in substrate binding.

This sequence belongs to the ribose 5-phosphate isomerase family. Homodimer.

The catalysed reaction is aldehydo-D-ribose 5-phosphate = D-ribulose 5-phosphate. It functions in the pathway carbohydrate degradation; pentose phosphate pathway; D-ribose 5-phosphate from D-ribulose 5-phosphate (non-oxidative stage): step 1/1. Functionally, catalyzes the reversible conversion of ribose-5-phosphate to ribulose 5-phosphate. This Prochlorococcus marinus (strain SARG / CCMP1375 / SS120) protein is Ribose-5-phosphate isomerase A.